Consider the following 347-residue polypeptide: Subtilase cytotoxin subunit A (347 aa).

A signal peptide spans 1 to 21 (MLKILWTYILFLLFISASARA). Residues 24–327 (PWYFDAIGLT…GRVLNAEKAI (304 aa)) enclose the Peptidase S8 domain. Catalysis depends on charge relay system residues D52, H89, and S272. An intrachain disulfide couples C288 to C331. Residues 322-347 (NAEKAISMFCKKNYIPVRQGRMSEEL) are A2 domain. Positions 344–347 (SEEL) match the Prevents secretion from ER motif.

This sequence belongs to the peptidase S8 family. In terms of assembly, forms a complex with SubB with the stoichiometry SubA1:SubB5 (called SubAB5).

The protein resides in the secreted. The protein localises to the host cytoplasm. Its subcellular location is the host cytosol. It localises to the host endoplasmic reticulum lumen. Protease subunit of subtilase cytotoxin SubAB5. An endoprotease specific for host endoplasmic reticulum (ER) chaperone BiP/HSPA5, has no activity on human HSP70 or HSPA8. Cleaves between 'Leu-416' and 'Leu-417' of BiP/HSPA5 in the hinge between BiP's ATPase and protein-binding domains. This induces host ER stress response and eventual cell death. Culture supernatant of E.coli expressing both subA and subB are toxic for Vero cells (African green monkey kidney cell line), Chinese hamster ovary cells and Hct-8 cells (human colonic epithelial cell line); the subunits are not toxic individually. Purified SubAB5 is highly toxic, &lt;0.1 pg is able to kill at least 50% of 30'000 Vero cells in a microtiter plate assay after 3 days; no cytotoxicity is seen at 24 hours. Preabsorption with cells expressing a ganglioside GM2 mimic reduced cytotoxicity of SubAB5 by 93% in the Vero cytotoxicity assay. Intraperitoneal injection of 200 ng of purified SubAB5 kills mice; the higher the dose the faster the mice die. Animals injected intraperitoneally with purified SubAB5 have microvascular thrombi in the brain and other organs, including the renal tubules and glomeruli. Injection induces an unfolded response in mice. Mice fed E.coli cells expressing cloned SubAB5 experience drastic weight loss and appear ill and lethargic. Protein synthesis in Vero cells is transiently inhibited by SubAB5; both subunits are required for this effect. Inhibition of protein synthesis is prevented by brefeldin A; cells are arrested in the G1 phase. SubAB5 at 100 ng/ml induced caspase-dependent apoptosis in Vero cells through mitochondrial membrane damage. The sequence is that of Subtilase cytotoxin subunit A from Escherichia coli.